The primary structure comprises 142 residues: Hemoglobin subunit alpha (142 aa).

One can recognise a Globin domain in the interval 2–142; sequence VLSAADKSNV…VGTVLTSKYR (141 aa). Serine 4 bears the Phosphoserine mark. N6-succinyllysine is present on residues lysine 8 and lysine 12. Lysine 17 carries the post-translational modification N6-acetyllysine; alternate. The residue at position 17 (lysine 17) is an N6-succinyllysine; alternate. At tyrosine 25 the chain carries Phosphotyrosine. Serine 36 is modified (phosphoserine). An N6-succinyllysine modification is found at lysine 41. Serine 50 is modified (phosphoserine). O2 is bound at residue histidine 59. Position 88 (histidine 88) interacts with heme b. Residue serine 103 is modified to Phosphoserine. Position 109 is a phosphothreonine (threonine 109). Phosphoserine occurs at positions 125 and 132. 2 positions are modified to phosphothreonine: threonine 135 and threonine 138. A Phosphoserine modification is found at serine 139.

Belongs to the globin family. Heterotetramer of two alpha chains and two beta chains. As to expression, red blood cells.

In terms of biological role, involved in oxygen transport from the lung to the various peripheral tissues. Its function is as follows. Hemopressin acts as an antagonist peptide of the cannabinoid receptor CNR1. Hemopressin-binding efficiently blocks cannabinoid receptor CNR1 and subsequent signaling. The chain is Hemoglobin subunit alpha (HBA) from Pantholops hodgsonii (Chiru).